The sequence spans 200 residues: Nucleoside triphosphate pyrophosphatase (200 aa).

The Proton acceptor role is filled by Asp-79.

It belongs to the Maf family. A divalent metal cation is required as a cofactor.

It localises to the cytoplasm. It catalyses the reaction a ribonucleoside 5'-triphosphate + H2O = a ribonucleoside 5'-phosphate + diphosphate + H(+). The catalysed reaction is a 2'-deoxyribonucleoside 5'-triphosphate + H2O = a 2'-deoxyribonucleoside 5'-phosphate + diphosphate + H(+). Nucleoside triphosphate pyrophosphatase. May have a dual role in cell division arrest and in preventing the incorporation of modified nucleotides into cellular nucleic acids. The polypeptide is Nucleoside triphosphate pyrophosphatase (Legionella pneumophila (strain Corby)).